A 396-amino-acid chain; its full sequence is MKIAYFDCFSGISGDMCLGALIACGLSQDELTSGLKGLGLEGWELRVREVKQHSIAATDVAVQVTGSQPHRHLADILGLINNSSLPAPVKEKSAAVFKNLARAEGQVHGIDASQVHFHEVGAVDAIIDIVGSILGLHLLGIEKVISSPLPAGSGWVDCRHGKLPVPAPATLYLLQGYPVYGTEDKAELVTPTGAALITTLADSFGPFPAMNLTRVGFGAGKTELPHPNLLRLALGEINSGQLEGEESSLVIETTIDDMNPEFFPALLEETMAAGAVDAFFTPVQMKKGRPGILFTALCPENKLAAVAAAIFTHSSTLGLRFRRDQRLVCQRRMAEVVTPYGTVPVKLGLYRDPTGQVITNIAPEYESCRQIAKSAGAPLKEVYAAALAAARALKAF.

The protein belongs to the LarC family.

It carries out the reaction Ni(II)-pyridinium-3,5-bisthiocarboxylate mononucleotide = pyridinium-3,5-bisthiocarboxylate mononucleotide + Ni(2+). Functionally, involved in the biosynthesis of a nickel-pincer cofactor ((SCS)Ni(II) pincer complex). Binds Ni(2+), and functions in nickel delivery to pyridinium-3,5-bisthiocarboxylic acid mononucleotide (P2TMN), to form the mature cofactor. Is thus probably required for the activation of nickel-pincer cofactor-dependent enzymes. This Moorella thermoacetica (strain ATCC 39073 / JCM 9320) protein is Pyridinium-3,5-bisthiocarboxylic acid mononucleotide nickel insertion protein.